A 764-amino-acid polypeptide reads, in one-letter code: MEVWEHSRPIADDTIKKTPSFTTLPIRINKQNDVADAATRRALRDWDYYLHDGLAERALISISELGNLGAFAYPEVPPERLAIVTYLTDLGILHDDGYEAMDMDQARTEHREFGALFDPHEQLPSRRGTRAAKLKKLVSQILLEAIRIDRDMGMYMFDMYNKGWLSVAGGEGKVPQFKSVEEYQAYRRDDFGIRAFWPMVEFGMAMRLSDEDKKLIEPVMEPIDKAIIWTNDYWSFDREYHESITNGSRLTNVVEVVRQIENKSIDEAKAAVRQLLVNLEQQYLERKRAIYAQNPSIPSHLRKWIEVVGITVAGTHFWASCSPRHHAWRNNSRNGLKPANHVAAPTLITPSNNLNSSKGSEEQMQDSDNGTRTQMCPANDHEVMQLNAKLSLGKQDGGHAMRAALALLSRAAEQCESLFDGMEHERARLLQSGEEKARLSWEGRSKGSQELEHSWYKPAKTALQAPIHYICSMPSKGVRSRMIEAFNYWLEVDETSLTKIRRLVDLLHNASLILDDIEDHSPKRRGRPATHTIFGHSQAINSANFMFVQAVQVARQFRNPNAVDILLEELENLYLGQSWDLDWKYKLRCPSPSEYLNMVDNKTGGLFRLLLRLMQAERKGTTEVDLDGLTVLFGRFFQIRDDYMNLRSGLYTEQKGFCEDLDEGKFSYPIVVCVANHADFRDLIDGVFRQRPTAITSGMQPLAPEIKRYVVEYLNTSGTFQHCREFLMQLESLIESEIDRIEKVTNEANPMLRLLLEKLSVKEN.

Residues 2 to 331 form a terpene cyclase region; the sequence is EVWEHSRPIA…SPRHHAWRNN (330 aa). Aspartate 95 lines the Mg(2+) pocket. Residues aspartate 95, 187 to 190, asparagine 231, 235 to 239, and 324 to 325 contribute to the substrate site; these read RRDD, SFDRE, and RH. Residues 95 to 99 carry the DDXXD 1 motif; it reads DDGYE. An NSE/DTE motif is present at residues 231–239; the sequence is NDYWSFDRE. Positions 332-759 are prenyltransferase; that stretch reads SRNGLKPANH…PMLRLLLEKL (428 aa). The tract at residues 347–372 is disordered; sequence LITPSNNLNSSKGSEEQMQDSDNGTR. Over residues 348–358 the composition is skewed to polar residues; the sequence is ITPSNNLNSSK. 3 residues coordinate isopentenyl diphosphate: lysine 476, arginine 479, and histidine 508. Residues aspartate 515 and aspartate 519 each coordinate Mg(2+). The short motif at 515–519 is the DDXXD 2 element; the sequence is DDIED. Dimethylallyl diphosphate is bound at residue arginine 524. Residue arginine 525 participates in isopentenyl diphosphate binding. Lysine 602, threonine 603, glutamine 638, asparagine 645, lysine 655, and lysine 665 together coordinate dimethylallyl diphosphate.

It in the N-terminal section; belongs to the terpene synthase family. In the C-terminal section; belongs to the FPP/GGPP synthase family. In terms of assembly, hexamer. Mg(2+) is required as a cofactor.

It catalyses the reaction isopentenyl diphosphate + (2E,6E)-farnesyl diphosphate = (2E,6E,10E)-geranylgeranyl diphosphate + diphosphate. The catalysed reaction is isopentenyl diphosphate + (2E,6E,10E)-geranylgeranyl diphosphate = (2E,6E,10E,14E)-geranylfarnesyl diphosphate + diphosphate. It carries out the reaction (2E,6E,10E,14E)-geranylfarnesyl diphosphate + H2O = sesterfisherol + diphosphate. It functions in the pathway secondary metabolite biosynthesis; terpenoid biosynthesis. Bifunctional terpene synthase; part of the gene cluster that mediates the biosynthesis of sesterfisheric acid. The bifunctional terpene synthase NfSS converts dimethylallyl diphosphate (DMAPP) and isopentenyl diphosphate (IPP) into sesterfisherol. The C-terminal prenyltransferase (PT) domain of NfSS catalyzes formation of geranylfarnesyl pyrophosphate (GFPP), whereas the N-terminal terpene cyclase (TC) domain catalyzes the cyclization of GFPP to sesterfisherol. The cytochrome P450 monooxygenase NfP450 then catalyzes oxidative modifications of sesterfisherol into sesterfisheric acid. The protein is Sesterfisherol synthase of Neosartorya fischeri (strain ATCC 1020 / DSM 3700 / CBS 544.65 / FGSC A1164 / JCM 1740 / NRRL 181 / WB 181) (Aspergillus fischerianus).